Reading from the N-terminus, the 257-residue chain is NAD-capped RNA hydrolase NudC (257 aa).

Arg-69 is a substrate binding site. Positions 98 and 101 each coordinate Zn(2+). A substrate-binding site is contributed by Glu-111. The Zn(2+) site is built by Cys-116 and Cys-119. A substrate-binding site is contributed by Tyr-124. The 124-residue stretch at 125–248 folds into the Nudix hydrolase domain; sequence PQIAPCIIVA…TVARRLIEDT (124 aa). Ala-158, Glu-174, and Glu-178 together coordinate a divalent metal cation. The short motif at 159–180 is the Nudix box element; sequence GFVEVGETLEQAVAREVMEESG. 192-199 contacts substrate; that stretch reads QPWPFPQS. Glu-219 is a binding site for a divalent metal cation. Residue Ala-241 participates in substrate binding.

It belongs to the Nudix hydrolase family. NudC subfamily. Homodimer. Requires Mg(2+) as cofactor. Mn(2+) serves as cofactor. It depends on Zn(2+) as a cofactor.

It catalyses the reaction a 5'-end NAD(+)-phospho-ribonucleoside in mRNA + H2O = a 5'-end phospho-adenosine-phospho-ribonucleoside in mRNA + beta-nicotinamide D-ribonucleotide + 2 H(+). The catalysed reaction is NAD(+) + H2O = beta-nicotinamide D-ribonucleotide + AMP + 2 H(+). The enzyme catalyses NADH + H2O = reduced beta-nicotinamide D-ribonucleotide + AMP + 2 H(+). Functionally, mRNA decapping enzyme that specifically removes the nicotinamide adenine dinucleotide (NAD) cap from a subset of mRNAs by hydrolyzing the diphosphate linkage to produce nicotinamide mononucleotide (NMN) and 5' monophosphate mRNA. The NAD-cap is present at the 5'-end of some mRNAs and stabilizes RNA against 5'-processing. Has preference for mRNAs with a 5'-end purine. Catalyzes the hydrolysis of a broad range of dinucleotide pyrophosphates. The sequence is that of NAD-capped RNA hydrolase NudC from Salmonella schwarzengrund (strain CVM19633).